Consider the following 172-residue polypeptide: Large ribosomal subunit protein uL10 (172 aa).

This sequence belongs to the universal ribosomal protein uL10 family. Part of the ribosomal stalk of the 50S ribosomal subunit. The N-terminus interacts with L11 and the large rRNA to form the base of the stalk. The C-terminus forms an elongated spine to which L12 dimers bind in a sequential fashion forming a multimeric L10(L12)X complex.

Its function is as follows. Forms part of the ribosomal stalk, playing a central role in the interaction of the ribosome with GTP-bound translation factors. The chain is Large ribosomal subunit protein uL10 from Prosthecochloris aestuarii (strain DSM 271 / SK 413).